The following is a 431-amino-acid chain: tRNA (adenine(37)-N6)-methyltransferase (431 aa).

Residues 30–168 (TEPIGYLESC…YIADYDSPQN (139 aa)) enclose the TsaA-like domain. S-adenosyl-L-methionine-binding positions include 47-49 (PRQ), 90-91 (HK), Arg-117, Leu-127, and 148-151 (IDGT). Residues 196-242 (LSGRGKVQPRQSTKERPKCLEDRTSGENSQKSRDMSEIQHTLPEDRE) form a disordered region. The span at 207–242 (STKERPKCLEDRTSGENSQKSRDMSEIQHTLPEDRE) shows a compositional bias: basic and acidic residues.

This sequence belongs to the tRNA methyltransferase O family.

It carries out the reaction N(6)-L-threonylcarbamoyladenosine(37) in tRNA + S-adenosyl-L-methionine = N(6)-methyl,N(6)-L-threonylcarbamoyladenosine(37) in tRNA + S-adenosyl-L-homocysteine + H(+). S-adenosyl-L-methionine-dependent methyltransferase responsible for the addition of the methyl group in the formation of N6-methyl-N6-threonylcarbamoyladenosine at position 37 (m(6)t(6)A37) of the tRNA anticodon loop of tRNA(Ser)(GCU). The methyl group of m(6)t(6)A37 may improve the efficiency of the tRNA decoding ability. May bind to tRNA. In Mus musculus (Mouse), this protein is tRNA (adenine(37)-N6)-methyltransferase.